Consider the following 80-residue polypeptide: MSQEAILEKVRSIVTEQLSVEAGEVKPESSFQNDLGADSLDTVELVMALEEAFDIEIPDEAAEGITTVGDAVKYIEDKQA.

In terms of domain architecture, Carrier spans 4–79; sequence EAILEKVRSI…DAVKYIEDKQ (76 aa). Residue Ser39 is modified to O-(pantetheine 4'-phosphoryl)serine.

This sequence belongs to the acyl carrier protein (ACP) family. Post-translationally, 4'-phosphopantetheine is transferred from CoA to a specific serine of apo-ACP by AcpS. This modification is essential for activity because fatty acids are bound in thioester linkage to the sulfhydryl of the prosthetic group.

The protein resides in the cytoplasm. It functions in the pathway lipid metabolism; fatty acid biosynthesis. Its function is as follows. Carrier of the growing fatty acid chain in fatty acid biosynthesis. This is Acyl carrier protein from Prochlorococcus marinus (strain MIT 9313).